A 312-amino-acid chain; its full sequence is DNA-directed RNA polymerase subunit alpha (312 aa).

Positions 1–229 (MLQYQIDRID…ELFQPLATVT (229 aa)) are alpha N-terminal domain (alpha-NTD). The interval 246 to 312 (IPLEELNLSV…ISIPQSRTSV (67 aa)) is alpha C-terminal domain (alpha-CTD).

The protein belongs to the RNA polymerase alpha chain family. In terms of assembly, in cyanobacteria the RNAP catalytic core is composed of 2 alpha, 1 beta, 1 beta', 1 gamma and 1 omega subunit. When a sigma factor is associated with the core the holoenzyme is formed, which can initiate transcription.

It carries out the reaction RNA(n) + a ribonucleoside 5'-triphosphate = RNA(n+1) + diphosphate. Its function is as follows. DNA-dependent RNA polymerase catalyzes the transcription of DNA into RNA using the four ribonucleoside triphosphates as substrates. The chain is DNA-directed RNA polymerase subunit alpha from Prochlorococcus marinus subsp. pastoris (strain CCMP1986 / NIES-2087 / MED4).